The following is a 351-amino-acid chain: Modulator of apoptosis 1 (351 aa).

The short motif at 49-52 is the LIR element; it reads YRLL. The interval 120 to 127 is BH3-like; it reads LSRALGHE. The segment at 202 to 205 is RASSF1-binding; that stretch reads KRRR.

It belongs to the PNMA family. Homodimer. Under normal circumstances, held in an inactive conformation by an intramolecular interaction. Interacts with BAX. Binding to RASSF1 isoform A (RASSF1A) relieves this inhibitory interaction and allows further binding to BAX. Also binds to BCL2 and BCLX. Recruited to the TNFRSF1A and TNFRSF10A complexes in response to their respective cognate ligand, after internalization. Interacts with TRIM39. Interacts with RASSF6. Interacts with ATG8 proteins MAP1LC3A, MAP1LC3B and MAP1LC3C. Does not interact with ATG8 proteins GABARAPL1, GABARAPL2 and GABARAP. Interacts with SQSTM1; promoting dissociation of SQSTM1 inclusion bodies that sequester KEAP1. Ubiquitinated and degraded during mitotic exit by APC/C-Cdh1, this modification is inhibited by TRIM39. Widely expressed, with high levels in heart and brain.

It localises to the cytoplasm. The protein resides in the cytosol. Its subcellular location is the mitochondrion outer membrane. The protein localises to the extracellular vesicle membrane. Its function is as follows. Retrotransposon-derived protein that forms virion-like capsids. Acts as an effector of BAX during apoptosis: enriched at outer mitochondria membrane and associates with BAX upon induction of apoptosis, facilitating BAX-dependent mitochondrial outer membrane permeabilization and apoptosis. Required for death receptor-dependent apoptosis. When associated with RASSF1, promotes BAX conformational change and translocation to mitochondrial membranes in response to TNF and TNFSF10 stimulation. Also promotes autophagy: promotes phagophore closure via association with ATG8 proteins. Acts as an inhibitor of the NFE2L2/NRF2 pathway via interaction with SQSTM1: interaction promotes dissociation of SQSTM1 inclusion bodies that sequester KEAP1, relieving inactivation of the BCR(KEAP1) complex. This is Modulator of apoptosis 1 from Homo sapiens (Human).